The following is a 156-amino-acid chain: MNIIEGNLHLNGDEKVAIINGRFNHIITDRLVEGAKDAFLRHGGKEENLDLILVPGAFEIPMALEKVLSSGKWDAVCCVGAVIRGSTPHFDYVSAETTKGIANVTLKYGKPVTFGVLTVDSIEQAIERAGSKAGNKGFEAMTSVVELLNLYKNIKA.

5-amino-6-(D-ribitylamino)uracil contacts are provided by residues Phe-23, 57 to 59, and 81 to 83; these read AFE and AVI. 86 to 87 is a (2S)-2-hydroxy-3-oxobutyl phosphate binding site; that stretch reads ST. The active-site Proton donor is His-89. Phe-114 serves as a coordination point for 5-amino-6-(D-ribitylamino)uracil. Position 128 (Arg-128) interacts with (2S)-2-hydroxy-3-oxobutyl phosphate.

It belongs to the DMRL synthase family.

It catalyses the reaction (2S)-2-hydroxy-3-oxobutyl phosphate + 5-amino-6-(D-ribitylamino)uracil = 6,7-dimethyl-8-(1-D-ribityl)lumazine + phosphate + 2 H2O + H(+). It participates in cofactor biosynthesis; riboflavin biosynthesis; riboflavin from 2-hydroxy-3-oxobutyl phosphate and 5-amino-6-(D-ribitylamino)uracil: step 1/2. Catalyzes the formation of 6,7-dimethyl-8-ribityllumazine by condensation of 5-amino-6-(D-ribitylamino)uracil with 3,4-dihydroxy-2-butanone 4-phosphate. This is the penultimate step in the biosynthesis of riboflavin. This chain is 6,7-dimethyl-8-ribityllumazine synthase, found in Campylobacter fetus subsp. fetus (strain 82-40).